The following is a 688-amino-acid chain: MAKNFLIELGTEELPPTALRSLAEAFASNFEAGLKTAELSHEGIKWYAAPRRLALKVTALAEGQADKVVEKRGPAISVAFDAEGNATKAAQGWARGNGITVEQADRLKTDKGEWLLFKQEVAGKPVQELVMDIAAKALAGLPIPKAMRWGNSDIQFIRPVKTLTVLLGDELVEGKILGVASARTIRGHRFMGEQEFTIDSADQYPAILEERGKVMADYDARKAIILADAKKAADAVGGIADLEDDLVEEVTSLVEWPVVLTAKFEQVFLKVPSEALVYTMKGDQKYFPVYDADKNLLPNFIFVSNIESKEPRHVIEGNEKVVRPRLADAEFFFNTDRKRPLIDRLAELDQAIFQKQLGTIKDKTDRITELAGYIAEQIDADVEKSKRAGLLAKCDLMTSMVFEFTDTQGVMGMHYATHDGEDEQVALALYEQYMPRFAGDTLPSTGISSAVAMADKLDTIVGIFGIGQAPKGSDPFALRRASLGVLRIIVENGYNLDLTDLIGKAKELLGDKLTNENVEADVIDFMLGRFRAWYQDAGFSVDIIQAVLARRPTKPADFDQRVKAVSHFRELEAAEALAAANKRVGNILAKFDGELPAEIDLALLQEDAEKALAENVEVMTEALEPAFATGNYQEALSKLADLREPVDAFFDNVMVMADDEALKKNRLTLLNNLRNLFLQIADISLLQK.

The protein belongs to the class-II aminoacyl-tRNA synthetase family. As to quaternary structure, tetramer of two alpha and two beta subunits.

The protein resides in the cytoplasm. It catalyses the reaction tRNA(Gly) + glycine + ATP = glycyl-tRNA(Gly) + AMP + diphosphate. The sequence is that of Glycine--tRNA ligase beta subunit from Vibrio atlanticus (strain LGP32) (Vibrio splendidus (strain Mel32)).